A 527-amino-acid chain; its full sequence is MEVAMAMAVKVLLSLCCVGACGLAVYLYHILWLVPQKVLAKFEDQKIGGPRPSFPYGNLADMREAAAAAKAARASARRSGSGGGGIVHDYRPAVLPYYEKWRKEYGPIFTYSMGNVVFLHVSRPDVVRDINLCVSLDLGKSSYLKATHEPLFGGGILKSNGEAWLHQRKIIAPEFFLDKVKGMVDLMVDSAQPLLMSWEERVDRNGGITDIKIDDDIRAYSADVISRTCFGSSYIKGKEIFMKIRELQQAVSKPNVLAEMTGLRFFPSMRNKQAWELHKQVRKLILEIVKESGEDRNLLSAILHSASTSRVGIAEAENFIVDNCKSIYFAGHESTAVTAAWCLMLLGLHPEWQNRVREEVHEVCRGQPVDSRSLQKMKNLTMVIQETLRLYPAGAFVSRQALQELKLGGVHIPKGVNIYIPVSTMHLDPELWGPDVKEFNPERFSDVRPQLHSYLPFGAGARTCLGQGFAMAELKILISLIVSKFVLKLSPHYQHSPTLKLIVEPELGVDLTLTKVQSVCTKRGTAI.

Residues 1–14 (MEVAMAMAVKVLLS) are Lumenal-facing. A helical; Signal-anchor for type III membrane protein membrane pass occupies residues 15–35 (LCCVGACGLAVYLYHILWLVP). Over 36–527 (QKVLAKFEDQ…SVCTKRGTAI (492 aa)) the chain is Cytoplasmic. C464 contacts heme.

This sequence belongs to the cytochrome P450 family. The cofactor is heme.

It is found in the membrane. May be involved in gibberellin metabolism. The sequence is that of Cytochrome P450 714B3 (CYP714B3) from Zea mays (Maize).